Consider the following 314-residue polypeptide: Deoxymugineic acid synthase 1-A (314 aa).

The disordered stretch occupies residues 1 to 21 (MGAGDKTAAGMPRIGMGTAVQ). Asp-44 is an NADP(+) binding site. Tyr-49 (proton donor) is an active-site residue. A substrate-binding site is contributed by His-112. Residues 158–159 (AN), Gln-180, 258–266 (FDEARMREN), and 273–281 (ELTEEEHRR) contribute to the NADP(+) site.

It belongs to the aldo/keto reductase family. Mostly expressed in root tissues, observed in mesocotyl and embryonic roots, seedling roots, crown and seedling leafes, mature bracts, anthers, pistil, caryopsis and embryos.

It catalyses the reaction 2'-deoxymugineate + NAD(+) = 3''-deamino-3''-oxonicotianamine + NADH + H(+). It carries out the reaction 2'-deoxymugineate + NADP(+) = 3''-deamino-3''-oxonicotianamine + NADPH + H(+). Its pathway is siderophore biosynthesis. Its function is as follows. Catalyzes the reduction of a 3''-keto intermediate during the biosynthesis of 2'-deoxymugineic acid (DMA) from L-Met. Involved in the formation of phytosiderophores (MAs) belonging to the mugineic acid family and required to acquire iron. In Triticum aestivum (Wheat), this protein is Deoxymugineic acid synthase 1-A.